We begin with the raw amino-acid sequence, 202 residues long: Ribonuclease HII (202 aa).

Positions 12–201 (LLIAGVDEAG…VRQLKLFIPE (190 aa)) constitute an RNase H type-2 domain. The a divalent metal cation site is built by Asp18, Glu19, and Asp110.

The protein belongs to the RNase HII family. Requires Mn(2+) as cofactor. It depends on Mg(2+) as a cofactor.

Its subcellular location is the cytoplasm. The enzyme catalyses Endonucleolytic cleavage to 5'-phosphomonoester.. In terms of biological role, endonuclease that specifically degrades the RNA of RNA-DNA hybrids. The sequence is that of Ribonuclease HII from Coxiella burnetii (strain CbuK_Q154) (Coxiella burnetii (strain Q154)).